The primary structure comprises 331 residues: Protein RecA (331 aa).

66-73 (GPESSGKT) is an ATP binding site.

This sequence belongs to the RecA family.

Its subcellular location is the cytoplasm. In terms of biological role, can catalyze the hydrolysis of ATP in the presence of single-stranded DNA, the ATP-dependent uptake of single-stranded DNA by duplex DNA, and the ATP-dependent hybridization of homologous single-stranded DNAs. It interacts with LexA causing its activation and leading to its autocatalytic cleavage. The chain is Protein RecA from Lactobacillus delbrueckii subsp. bulgaricus (strain ATCC 11842 / DSM 20081 / BCRC 10696 / JCM 1002 / NBRC 13953 / NCIMB 11778 / NCTC 12712 / WDCM 00102 / Lb 14).